The sequence spans 51 residues: U-Asilidin(1)-Eru1a (51 aa).

The N-terminal stretch at methionine 1–alanine 23 is a signal peptide. Disulfide bonds link cysteine 26–cysteine 40, cysteine 33–cysteine 44, and cysteine 39–cysteine 49.

Belongs to the asilidin-1 family. In terms of tissue distribution, expressed by the venom gland. The most highly expressed peptides U-Asilidin1-Mar1a is around 3000 times higher expressed in the venom thoracic glands compared to its body tissues.

The protein resides in the secreted. Its function is as follows. Induces neurotoxic effect on honeybees, including slow movements, disorientation and paralysis. Since it provokes similar symptoms than omega-atracotoxin, it is probable that it acts in the same way by inhibiting voltage-gated calcium channels. The sequence is that of U-Asilidin(1)-Eru1a from Eutolmus rufibarbis (Golden-tabbed robberfly).